A 348-amino-acid polypeptide reads, in one-letter code: Large ribosomal subunit protein uL10 (348 aa).

Residues 291 to 348 (LPEELRGVSAADTGAAEEEESTDEEAADADQADAAEDDDAADDDGDDEDAGDALGSLF) form a disordered region. The span at 305–341 (AAEEEESTDEEAADADQADAAEDDDAADDDGDDEDAG) shows a compositional bias: acidic residues.

This sequence belongs to the universal ribosomal protein uL10 family. As to quaternary structure, part of the 50S ribosomal subunit. Forms part of the ribosomal stalk which helps the ribosome interact with GTP-bound translation factors. Forms a heptameric L10(L12)2(L12)2(L12)2 complex, where L10 forms an elongated spine to which the L12 dimers bind in a sequential fashion.

Forms part of the ribosomal stalk, playing a central role in the interaction of the ribosome with GTP-bound translation factors. This Haloferax volcanii (strain ATCC 29605 / DSM 3757 / JCM 8879 / NBRC 14742 / NCIMB 2012 / VKM B-1768 / DS2) (Halobacterium volcanii) protein is Large ribosomal subunit protein uL10.